We begin with the raw amino-acid sequence, 70 residues long: U-scutigerotoxin(02)-Tl1a (70 aa).

The first 17 residues, 1 to 17 (MKYILLGLLLMVVLANA), serve as a signal peptide directing secretion.

It belongs to the scutigerotoxin-02 family. Post-translationally, contains 4 disulfide bonds. In terms of tissue distribution, expressed by the venom gland.

The protein resides in the secreted. The polypeptide is U-scutigerotoxin(02)-Tl1a (Thereuopoda longicornis (Long-legged centipede)).